Reading from the N-terminus, the 68-residue chain is Preprofallaxidin-5 (68 aa).

An N-terminal signal peptide occupies residues M1 to C22. A propeptide spanning residues E23–R51 is cleaved from the precursor. A disordered region spans residues E24 to K50. Positions K30–N42 are enriched in acidic residues. The residue at position 64 (L64) is a Leucine amide. S68 is a propeptide.

It belongs to the frog skin active peptide (FSAP) family. Brevinin subfamily. As to expression, expressed by the skin glands.

The protein localises to the secreted. This Litoria fallax (Eastern dwarf tree frog) protein is Preprofallaxidin-5.